A 250-amino-acid polypeptide reads, in one-letter code: Triosephosphate isomerase (250 aa).

9 to 11 (NWK) serves as a coordination point for substrate. His94 acts as the Electrophile in catalysis. Glu166 acts as the Proton acceptor in catalysis. Substrate is bound by residues Gly172, Ser212, and 233-234 (GG).

The protein belongs to the triosephosphate isomerase family. Homodimer.

The protein localises to the cytoplasm. The enzyme catalyses D-glyceraldehyde 3-phosphate = dihydroxyacetone phosphate. It participates in carbohydrate biosynthesis; gluconeogenesis. It functions in the pathway carbohydrate degradation; glycolysis; D-glyceraldehyde 3-phosphate from glycerone phosphate: step 1/1. Its function is as follows. Involved in the gluconeogenesis. Catalyzes stereospecifically the conversion of dihydroxyacetone phosphate (DHAP) to D-glyceraldehyde-3-phosphate (G3P). In Treponema denticola (strain ATCC 35405 / DSM 14222 / CIP 103919 / JCM 8153 / KCTC 15104), this protein is Triosephosphate isomerase.